A 425-amino-acid polypeptide reads, in one-letter code: Protein upregulated in glial subsets pugs-5 (425 aa).

The segment covering 355-373 has biased composition (basic and acidic residues); sequence NNNDVEKSTQIEKKPEKQG. A disordered region spans residues 355–407; that stretch reads NNNDVEKSTQIEKKPEKQGPEIQEEVVEMETVKDEQPPKTSAVRFKENSPRLM.

This is Protein upregulated in glial subsets pugs-5 from Caenorhabditis elegans.